A 422-amino-acid polypeptide reads, in one-letter code: UDP-N-acetylglucosamine 1-carboxyvinyltransferase (422 aa).

22–23 contacts phosphoenolpyruvate; sequence KN. Residue Arg94 coordinates UDP-N-acetyl-alpha-D-glucosamine. Cys118 acts as the Proton donor in catalysis. At Cys118 the chain carries 2-(S-cysteinyl)pyruvic acid O-phosphothioketal. UDP-N-acetyl-alpha-D-glucosamine is bound by residues 123-127, Asp308, and Ile330; that span reads RPVDL.

The protein belongs to the EPSP synthase family. MurA subfamily.

The protein resides in the cytoplasm. It catalyses the reaction phosphoenolpyruvate + UDP-N-acetyl-alpha-D-glucosamine = UDP-N-acetyl-3-O-(1-carboxyvinyl)-alpha-D-glucosamine + phosphate. It participates in cell wall biogenesis; peptidoglycan biosynthesis. In terms of biological role, cell wall formation. Adds enolpyruvyl to UDP-N-acetylglucosamine. This Dinoroseobacter shibae (strain DSM 16493 / NCIMB 14021 / DFL 12) protein is UDP-N-acetylglucosamine 1-carboxyvinyltransferase.